We begin with the raw amino-acid sequence, 276 residues long: Proteasome subunit beta type-8 (276 aa).

A propeptide spans 1–72 (MALLDLCGAP…RKVQIEMAHG (72 aa)) (removed in mature form). Thr73 serves as the catalytic Nucleophile.

This sequence belongs to the peptidase T1B family. As to quaternary structure, the 26S proteasome consists of a 20S proteasome core and two 19S regulatory subunits. The 20S proteasome core is composed of 28 subunits that are arranged in four stacked rings, resulting in a barrel-shaped structure. The two end rings are each formed by seven alpha subunits, and the two central rings are each formed by seven beta subunits. The catalytic chamber with the active sites is on the inside of the barrel. Component of the immunoproteasome, where it displaces the equivalent housekeeping subunit PSMB5. Component of the spermatoproteasome, a form of the proteasome specifically found in testis. Directly interacts with POMP. Interacts with TAP1. Autocleaved. The resulting N-terminal Thr residue of the mature subunit is responsible for the nucleophile proteolytic activity.

It localises to the cytoplasm. Its subcellular location is the nucleus. The catalysed reaction is Cleavage of peptide bonds with very broad specificity.. Functionally, the proteasome is a multicatalytic proteinase complex which is characterized by its ability to cleave peptides with Arg, Phe, Tyr, Leu, and Glu adjacent to the leaving group at neutral or slightly basic pH. The proteasome has an ATP-dependent proteolytic activity. This subunit is involved in antigen processing to generate class I binding peptides. May participate in the generation of spliced peptides resulting from the ligation of two separate proteasomal cleavage products that are not contiguous in the parental protein. Required for adipocyte differentiation. This is Proteasome subunit beta type-8 (Psmb8) from Rattus norvegicus (Rat).